A 354-amino-acid chain; its full sequence is MGSGISSESKESAKRSKELEKKLQEDAERDARTVKLLLLGAGESGKSTIVKQMKIIHKNGYSEQECMEFKAVIYSNTLQSILAIVKAMTTLGIDYVNPRSAEDQRQLYAMANTLEDGGMTPQLAEVIKRLWRDPGIQACFERASEYQLNDSAAYYLNDLDRITASGYVPNEQDVLHSRVKTTGIIETQFSFKDLHFRMFDVGGQRSERKKWIHCFEGVTCIIFCAALSAYDMVLVEDEEVNRMHESLHLFNSICNHKYFSTTSIVLFLNKKDIFQEKVTKVHLSICFPEYTGPNTFEDAGNYIKNQFLDLNLKKEDKEIYSHMTCATDTQNVKFVFDAVTDIIIKENLKDCGLF.

The tract at residues Met-1–Ala-27 is disordered. A lipid anchor (N-myristoyl glycine) is attached at Gly-2. Over residues Glu-8–Ala-27 the composition is skewed to basic and acidic residues. Residues Arg-32–Phe-354 enclose the G-alpha domain. The tract at residues Lys-35–Thr-48 is G1 motif. Residues Gly-40 to Ser-47, Leu-175 to Thr-181, Asp-200 to Gln-204, Asn-269 to Asp-272, and Ala-326 contribute to the GTP site. Residues Ser-47 and Thr-181 each coordinate Mg(2+). The segment at Asp-173–Thr-181 is G2 motif. The interval Phe-196–Arg-205 is G3 motif. A G4 motif region spans residues Val-265–Asp-272. Positions Thr-324–Thr-329 are G5 motif.

The protein belongs to the G-alpha family. G(i/o/t/z) subfamily. As to quaternary structure, g proteins are composed of 3 units; alpha, beta and gamma, respectively GNAT3, GNB1 and GNG13 for Gustducin heterotrimer for bitter taste transduction. The alpha chain contains the guanine nucleotide binding site. Component of the TAS2R14-GNAT3 complex, consisting of TAS2R14, GNAT3, GNB1 and GNG2; within the complex interacts with TAS2R14; this complex plays a role in the perception of bitterness. Gustducin heterotrimer may also be composed of GNAT3, GNB3 and GNG13. Post-translationally, potential N-myristoylation may anchor alpha-subunit to the inner surface of plasma membrane. As to expression, expressed in taste buds (sensory organs of clustered epithelial cells) of the circumvallate and foliate papillae of the tongue at protein level. Expressed in enteroendocrine L cells of the gut. Detected also in spermatozoa.

It localises to the cytoplasm. Its function is as follows. Guanine nucleotide-binding protein (G protein) alpha subunit playing a prominent role in bitter and sweet taste transduction as well as in umami (monosodium glutamate, monopotassium glutamate, and inosine monophosphate) taste transduction. Transduction by this alpha subunit involves coupling of specific cell-surface receptors with a cGMP-phosphodiesterase; Activation of phosphodiesterase lowers intracellular levels of cAMP and cGMP which may open a cyclic nucleotide-suppressible cation channel leading to influx of calcium, ultimately leading to release of neurotransmitter. Indeed, denatonium and strychnine induce transient reduction in cAMP and cGMP in taste tissue, whereas this decrease is inhibited by GNAT3 antibody. Gustducin heterotrimer transduces response to bitter and sweet compounds via regulation of phosphodiesterase for alpha subunit, as well as via activation of phospholipase C for beta and gamma subunits, with ultimate increase inositol trisphosphate and increase of intracellular Calcium. GNAT3 can functionally couple to taste receptors to transmit intracellular signal: receptor heterodimer TAS1R2/TAS1R3 senses sweetness and TAS1R1/TAS1R3 transduces umami taste, whereas the T2R family GPCRs such as TAS2R14 act as bitter sensors. Also functions as lumenal sugar sensors in the gut to control the expression of the Na+-glucose transporter SGLT1 in response to dietaty sugar, as well as the secretion of Glucagon-like peptide-1, GLP-1 and glucose-dependent insulinotropic polypeptide, GIP. Thus, may modulate the gut capacity to absorb sugars, with implications in malabsorption syndromes and diet-related disorders including diabetes and obesity. This is Guanine nucleotide-binding protein G(t) subunit alpha-3 (GNAT3) from Homo sapiens (Human).